A 489-amino-acid polypeptide reads, in one-letter code: DNA-dependent metalloprotease SPRTN (489 aa).

Met-1 carries the N-acetylmethionine modification. In terms of domain architecture, SprT-like spans 45–212; sequence LQALFVQFND…KTCGGTYIKI (168 aa). Residue His-111 coordinates Zn(2+). Residue Glu-112 is part of the active site. Zn(2+) is bound by residues His-115 and His-130. Lys-230 bears the N6-acetyllysine mark. The SHP-box motif lies at 253-261; sequence FSGKGYVLG. At Ser-268 the chain carries Phosphoserine. A Glycyl lysine isopeptide (Lys-Gly) (interchain with G-Cter in SUMO2) cross-link involves residue Lys-303. Residues 325–332 carry the PIP-box motif; it reads QNVLSNYF. Lys-341 is covalently cross-linked (Glycyl lysine isopeptide (Lys-Gly) (interchain with G-Cter in SUMO2); alternate). A Glycyl lysine isopeptide (Lys-Gly) (interchain with G-Cter in ubiquitin); alternate cross-link involves residue Lys-341. Residues 357–409 form a disordered region; that stretch reads GNIPKNSVSSSSQRRVSSSKISLRNSSKVTESASVMPSQDVSGSEDTFPNKRP. A Glycyl lysine isopeptide (Lys-Gly) (interchain with G-Cter in SUMO2) cross-link involves residue Lys-361. The span at 363-383 shows a compositional bias: low complexity; the sequence is SVSSSSQRRVSSSKISLRNSS. 2 positions are modified to phosphoserine; by CHEK1: Ser-373 and Ser-374. Lys-376 participates in a covalent cross-link: Glycyl lysine isopeptide (Lys-Gly) (interchain with G-Cter in SUMO2); alternate. Lys-376 is covalently cross-linked (Glycyl lysine isopeptide (Lys-Gly) (interchain with G-Cter in ubiquitin); alternate). Ser-383 is subject to Phosphoserine; by CHEK1. A compositionally biased stretch (polar residues) spans 384 to 403; it reads KVTESASVMPSQDVSGSEDT. The short motif at 402–413 is the Nuclear localization signal element; it reads DTFPNKRPRLED. Residue Lys-414 forms a Glycyl lysine isopeptide (Lys-Gly) (interchain with G-Cter in ubiquitin) linkage. Residues Lys-423 and Lys-424 each participate in a glycyl lysine isopeptide (Lys-Gly) (interchain with G-Cter in SUMO2) cross-link. The disordered stretch occupies residues 428–453; the sequence is KSSGNDPKYSTTTAQNSSSSSSQSKM. Lys-435 participates in a covalent cross-link: Glycyl lysine isopeptide (Lys-Gly) (interchain with G-Cter in ubiquitin). Over residues 437-451 the composition is skewed to low complexity; sequence STTTAQNSSSSSSQS. The UBZ4-type zinc-finger motif lies at 453–480; the sequence is MVNCPVCQNEVLESQINEHLDWCLEGDS. The Zn(2+) site is built by Cys-456, Cys-459, His-471, and Cys-475. Lys-484 participates in a covalent cross-link: Glycyl lysine isopeptide (Lys-Gly) (interchain with G-Cter in SUMO2).

Belongs to the Spartan family. Homodimer. Interacts (VIA PIP-box) with PCNA (when ubiquitinated). Interacts (via its SHP-box) with VCP/p97. Interacts with RAD18. Interacts with KCTD13 and POLD3. Zn(2+) serves as cofactor. Post-translationally, autocatalytically cleaved in response to double-stranded DNA-binding: autocatalytic cleavage takes place in trans and leads to inactivation. In terms of processing, monoubiquitinated; monoubiquitination promotes exclusion from chromatin. Deubiquitinated by VCPIP1: deubiquitination is required for subsequent acetylation and recruitment to chromatin and DNA damage sites. Acetylated following deubiquitination by VCPIP1, leading to recruitment to chromatin and DNA damage sites. Post-translationally, phosphorylation by CHEK1 promotes recruitment to chromatin.

It localises to the nucleus. Its subcellular location is the chromosome. With respect to regulation, DNA-binding activates the protease activity: single-stranded DNA-binding specifically activates ability to cleave covalent DNA-protein cross-links (DPCs). In contrast, double-stranded DNA-binding specifically activates autocatalytic cleavage, and subsequent inactivation. Functionally, DNA-dependent metalloendopeptidase that mediates the proteolytic cleavage of covalent DNA-protein cross-links (DPCs) during DNA synthesis, thereby playing a key role in maintaining genomic integrity. DPCs are highly toxic DNA lesions that interfere with essential chromatin transactions, such as replication and transcription, and which are induced by reactive agents, such as UV light or formaldehyde. Associates with the DNA replication machinery and specifically removes DPCs during DNA synthesis. Catalyzes proteolytic cleavage of the HMCES DNA-protein cross-link following unfolding by the BRIP1/FANCJ helicase. Acts as a pleiotropic protease for DNA-binding proteins cross-linked with DNA, such as TOP1, TOP2A, histones H3 and H4. Mediates degradation of DPCs that are not ubiquitinated, while it is not able to degrade ubiquitinated DPCs. SPRTN activation requires polymerase collision with DPCs followed by helicase bypass of DPCs. Involved in recruitment of VCP/p97 to sites of DNA damage. Also acts as an activator of CHEK1 during normal DNA replication by mediating proteolytic cleavage of CHEK1, thereby promoting CHEK1 removal from chromatin and subsequent activation. Does not activate CHEK1 in response to DNA damage. May also act as a 'reader' of ubiquitinated PCNA: recruited to sites of UV damage and interacts with ubiquitinated PCNA and RAD18, the E3 ubiquitin ligase that monoubiquitinates PCNA. Facilitates chromatin association of RAD18 and is required for efficient PCNA monoubiquitination, promoting a feed-forward loop to enhance PCNA ubiquitination and translesion DNA synthesis. This Homo sapiens (Human) protein is DNA-dependent metalloprotease SPRTN.